Here is a 524-residue protein sequence, read N- to C-terminus: 2-isopropylmalate synthase (524 aa).

Residues 12–274 (VIIFDTTLRD…WNRIETTMLT (263 aa)) form the Pyruvate carboxyltransferase domain. Mn(2+) contacts are provided by D21, H209, H211, and N245. A regulatory domain region spans residues 398–524 (KLMSLTVIAG…EDAPTVAVAG (127 aa)).

It belongs to the alpha-IPM synthase/homocitrate synthase family. LeuA type 1 subfamily. Homodimer. Mn(2+) is required as a cofactor.

It localises to the cytoplasm. The catalysed reaction is 3-methyl-2-oxobutanoate + acetyl-CoA + H2O = (2S)-2-isopropylmalate + CoA + H(+). Its pathway is amino-acid biosynthesis; L-leucine biosynthesis; L-leucine from 3-methyl-2-oxobutanoate: step 1/4. In terms of biological role, catalyzes the condensation of the acetyl group of acetyl-CoA with 3-methyl-2-oxobutanoate (2-ketoisovalerate) to form 3-carboxy-3-hydroxy-4-methylpentanoate (2-isopropylmalate). This is 2-isopropylmalate synthase from Rhodopseudomonas palustris (strain TIE-1).